The chain runs to 290 residues: Inositol monophosphatase 2 (290 aa).

Residues E83, D103, I105, and D106 each coordinate Mg(2+). E83 contacts substrate. Substrate-binding positions include 105–108 (IDGT), 207–209 (GSS), Q226, and D233. Position 233 (D233) interacts with Mg(2+).

It belongs to the inositol monophosphatase superfamily. In terms of assembly, homodimer. It depends on Mg(2+) as a cofactor. Mostly expressed in brain, small intestine, heart, kidney, and spleen (at protein level).

Its subcellular location is the cytoplasm. The catalysed reaction is a myo-inositol phosphate + H2O = myo-inositol + phosphate. It carries out the reaction 1D-myo-inositol 1-phosphate + H2O = myo-inositol + phosphate. The enzyme catalyses 1D-myo-inositol 2-phosphate + H2O = myo-inositol + phosphate. It catalyses the reaction 1D-myo-inositol 3-phosphate + H2O = myo-inositol + phosphate. The catalysed reaction is 1D-myo-inositol 4-phosphate + H2O = myo-inositol + phosphate. It carries out the reaction 1D-myo-inositol 5-phosphate + H2O = myo-inositol + phosphate. The enzyme catalyses 1D-myo-inositol 6-phosphate + H2O = myo-inositol + phosphate. It catalyses the reaction alpha-D-glucose 1-phosphate + H2O = D-glucose + phosphate. The catalysed reaction is glycerol 2-phosphate + H2O = glycerol + phosphate. It carries out the reaction adenosine 2'-phosphate + H2O = adenosine + phosphate. Its pathway is polyol metabolism; myo-inositol biosynthesis; myo-inositol from D-glucose 6-phosphate: step 2/2. Phosphatase that can use myo-inositol monophosphates, myo-inositol 1,4-diphosphate, scyllo-inositol-1,4-diphosphate, glucose-1-phosphate, beta-glycerophosphate and 2'-AMP as substrates in vitro. No physiological substrates has been described yet. Has been implicated as the pharmacological target for lithium Li(+) action in brain. The protein is Inositol monophosphatase 2 of Mus musculus (Mouse).